We begin with the raw amino-acid sequence, 135 residues long: Agouti-signaling protein (135 aa).

An N-terminal signal peptide occupies residues 1–22 (MNILRLLLATLLVCLCLLTAYS). Asn39 is a glycosylation site (N-linked (GlcNAc...) asparagine). Residues 56 to 101 (NKKSKKISRKEAEKKRSSKKKASMKNVAQPRRPRPPPPAPCVATRD) are disordered. 5 disulfide bridges follow: Cys96-Cys111, Cys103-Cys117, Cys110-Cys128, Cys114-Cys135, and Cys119-Cys126. Positions 96-135 (CVATRDSCKPPAPACCDPCASCQCRFFRSSCSCRVLNPTC) constitute an Agouti domain.

It localises to the secreted. Its function is as follows. Involved in the regulation of melanogenesis. The binding of ASP to MC1R precludes alpha-MSH initiated signaling and thus blocks production of cAMP, leading to a down-regulation of eumelanogenesis (brown/black pigment) and thus increasing synthesis of pheomelanin (yellow/red pigment). The chain is Agouti-signaling protein (ASIP) from Felis catus (Cat).